The primary structure comprises 541 residues: Chaperonin GroEL 1 (541 aa).

ATP-binding positions include 29–32 (TLGP), 86–90 (DGTTT), G413, and D492.

Belongs to the chaperonin (HSP60) family. As to quaternary structure, forms a cylinder of 14 subunits composed of two heptameric rings stacked back-to-back. Interacts with the co-chaperonin GroES.

The protein localises to the cytoplasm. The catalysed reaction is ATP + H2O + a folded polypeptide = ADP + phosphate + an unfolded polypeptide.. In terms of biological role, together with its co-chaperonin GroES, plays an essential role in assisting protein folding. The GroEL-GroES system forms a nano-cage that allows encapsulation of the non-native substrate proteins and provides a physical environment optimized to promote and accelerate protein folding. This Rhodococcus jostii (strain RHA1) protein is Chaperonin GroEL 1.